We begin with the raw amino-acid sequence, 381 residues long: N-acetyldiaminopimelate deacetylase (381 aa).

The active site involves Asp73. Glu132 functions as the Proton acceptor in the catalytic mechanism.

This sequence belongs to the peptidase M20A family. N-acetyldiaminopimelate deacetylase subfamily.

The catalysed reaction is N-acetyl-(2S,6S)-2,6-diaminopimelate + H2O = (2S,6S)-2,6-diaminopimelate + acetate. The protein operates within amino-acid biosynthesis; L-lysine biosynthesis via DAP pathway; LL-2,6-diaminopimelate from (S)-tetrahydrodipicolinate (acetylase route): step 3/3. Its function is as follows. Catalyzes the conversion of N-acetyl-diaminopimelate to diaminopimelate and acetate. This Limosilactobacillus reuteri (strain DSM 20016) (Lactobacillus reuteri) protein is N-acetyldiaminopimelate deacetylase.